The primary structure comprises 1614 residues: Adenylate cyclase type 10 (1614 aa).

Guanylate cyclase domains lie at valine 42–glutamine 179 and threonine 293–methionine 418. Mg(2+) contacts are provided by aspartate 47 and isoleucine 48. An ATP-binding site is contributed by aspartate 47 to threonine 52. Lysine 95 serves as a coordination point for hydrogencarbonate. Residue aspartate 99 participates in Mg(2+) binding. ATP is bound by residues aspartate 99 and lysine 144. Valine 167, arginine 176, and methionine 337 together coordinate hydrogencarbonate. ATP contacts are provided by residues valine 406 and asparagine 412–arginine 416.

Belongs to the adenylyl cyclase class-4/guanylyl cyclase family. The cofactor is Mg(2+). Mn(2+) is required as a cofactor. As to expression, expressed in testis.

The protein resides in the cell membrane. It is found in the cytoplasm. It localises to the cytoskeleton. The protein localises to the perinuclear region. Its subcellular location is the nucleus. The protein resides in the cell projection. It is found in the cilium. It localises to the mitochondrion. It catalyses the reaction ATP = 3',5'-cyclic AMP + diphosphate. Activated by manganese or magnesium ions. In the presence of magnesium ions, the enzyme is activated by bicarbonate. Calcium mildly increases the enzyme activity, also in the presence of magnesium ions. Functionally, catalyzes the formation of the signaling molecule cAMP. May function as sensor that mediates responses to changes in cellular bicarbonate and CO(2) levels. Has a critical role in mammalian spermatogenesis by producing the cAMP which regulates cAMP-responsive nuclear factors indispensable for sperm maturation in the epididymis. Induces capacitation, the maturational process that sperm undergo prior to fertilization. Involved in ciliary beat regulation. The sequence is that of Adenylate cyclase type 10 (Adcy10) from Mus musculus (Mouse).